Reading from the N-terminus, the 441-residue chain is 5-methylthioadenosine/S-adenosylhomocysteine deaminase (441 aa).

Histidine 70 and histidine 72 together coordinate Zn(2+). Residues glutamate 99 and histidine 191 each coordinate substrate. Histidine 218 contacts Zn(2+). Substrate is bound by residues glutamate 221 and aspartate 306. Residue aspartate 306 participates in Zn(2+) binding.

It belongs to the metallo-dependent hydrolases superfamily. MTA/SAH deaminase family. It depends on Zn(2+) as a cofactor.

The enzyme catalyses S-adenosyl-L-homocysteine + H2O + H(+) = S-inosyl-L-homocysteine + NH4(+). The catalysed reaction is S-methyl-5'-thioadenosine + H2O + H(+) = S-methyl-5'-thioinosine + NH4(+). In terms of biological role, catalyzes the deamination of 5-methylthioadenosine and S-adenosyl-L-homocysteine into 5-methylthioinosine and S-inosyl-L-homocysteine, respectively. Is also able to deaminate adenosine. This Lawsonia intracellularis (strain PHE/MN1-00) protein is 5-methylthioadenosine/S-adenosylhomocysteine deaminase.